The following is a 469-amino-acid chain: Sorting and assembly machinery component 50 homolog (469 aa).

One can recognise a POTRA domain in the interval 45 to 125 (VVVQHVHFDG…LDVTFEVTEL (81 aa)). N6-methyllysine is present on Lys-255.

The protein belongs to the SAM50/omp85 family. Associates with the mitochondrial contact site and cristae organizing system (MICOS) complex, composed of at least MICOS10/MIC10, CHCHD3/MIC19, CHCHD6/MIC25, APOOL/MIC27, IMMT/MIC60, APOO/MIC23/MIC26 and QIL1/MIC13. This complex was also known under the names MINOS or MitOS complex. The MICOS complex associates with mitochondrial outer membrane proteins SAMM50, MTX1 and MTX2 (together described as components of the mitochondrial outer membrane sorting assembly machinery (SAM) complex) and DNAJC11, mitochondrial inner membrane protein TMEM11 and with HSPA9. The MICOS and SAM complexes together with DNAJC11 are part of a large protein complex spanning both membranes termed the mitochondrial intermembrane space bridging (MIB) complex. Interacts with IMMT/MIC60. Interacts with CHCHD3/MIC19. Interacts with ARMC1.

It localises to the mitochondrion outer membrane. The protein localises to the cytoplasm. The protein resides in the mitochondrion. Its function is as follows. Plays a crucial role in the maintenance of the structure of mitochondrial cristae and the proper assembly of the mitochondrial respiratory chain complexes. Required for the assembly of TOMM40 into the TOM complex. This is Sorting and assembly machinery component 50 homolog (SAMM50) from Bos taurus (Bovine).